A 125-amino-acid polypeptide reads, in one-letter code: uncharacterized protein (125 aa).

This is an uncharacterized protein from Escherichia coli (strain K12).